Reading from the N-terminus, the 424-residue chain is UDP-glycosyltransferase 76H1 (424 aa).

Residues serine 248, 306–307 (WA), 324–332 (HCGWNSTIE), and 346–349 (FADQ) each bind UDP-alpha-D-glucose.

It belongs to the UDP-glycosyltransferase family.

In terms of biological role, may glycosylate diterpenes or flavonols in leaves. The chain is UDP-glycosyltransferase 76H1 from Stevia rebaudiana (Stevia).